We begin with the raw amino-acid sequence, 439 residues long: Probable cinnamyl alcohol dehydrogenase 8C (439 aa).

A Zn(2+)-binding site is contributed by Cys120. Thr122 is a binding site for NADP(+). Positions 142, 143, 173, 176, 179, 187, and 239 each coordinate Zn(2+). Residues Thr243, 264 to 269 (GLGGLG), 287 to 292 (STSPGK), Thr327, Gly351, and 374 to 376 (NCV) each bind NADP(+).

It belongs to the zinc-containing alcohol dehydrogenase family. In terms of assembly, homodimer. Zn(2+) serves as cofactor.

The enzyme catalyses (E)-cinnamyl alcohol + NADP(+) = (E)-cinnamaldehyde + NADPH + H(+). It carries out the reaction (E)-coniferol + NADP(+) = (E)-coniferaldehyde + NADPH + H(+). It catalyses the reaction (E)-sinapyl alcohol + NADP(+) = (E)-sinapaldehyde + NADPH + H(+). The catalysed reaction is (E)-4-coumaroyl alcohol + NADP(+) = (E)-4-coumaraldehyde + NADPH + H(+). The enzyme catalyses (E)-caffeyl alcohol + NADP(+) = (E)-caffeyl aldehyde + NADPH + H(+). It functions in the pathway aromatic compound metabolism; phenylpropanoid biosynthesis. Its function is as follows. Involved in lignin biosynthesis. Catalyzes the final step specific for the production of lignin monomers. Catalyzes the NADPH-dependent reduction of coniferaldehyde, 5-hydroxyconiferaldehyde, sinapaldehyde, 4-coumaraldehyde and caffeyl aldehyde to their respective alcohols. The polypeptide is Probable cinnamyl alcohol dehydrogenase 8C (Oryza sativa subsp. japonica (Rice)).